An 86-amino-acid polypeptide reads, in one-letter code: Small ribosomal subunit protein bS20 (86 aa).

Residues 1–27 (MANSKQAKKRAGQSEKRRQHNASRRSM) are disordered.

Belongs to the bacterial ribosomal protein bS20 family.

Its function is as follows. Binds directly to 16S ribosomal RNA. The sequence is that of Small ribosomal subunit protein bS20 from Colwellia psychrerythraea (strain 34H / ATCC BAA-681) (Vibrio psychroerythus).